A 372-amino-acid chain; its full sequence is Queuine tRNA-ribosyltransferase (372 aa).

The active-site Proton acceptor is the Asp92. Substrate contacts are provided by residues 92–96 (DSGGF), Asp146, Gln188, and Gly215. Residues 246–252 (GIGTLRE) are RNA binding. Asp265 (nucleophile) is an active-site residue. Residues 270–274 (TRLGR) form an RNA binding; important for wobble base 34 recognition region. Residues Cys303, Cys305, Cys308, and His334 each contribute to the Zn(2+) site.

This sequence belongs to the queuine tRNA-ribosyltransferase family. Homodimer. Within each dimer, one monomer is responsible for RNA recognition and catalysis, while the other monomer binds to the replacement base PreQ1. It depends on Zn(2+) as a cofactor.

It carries out the reaction 7-aminomethyl-7-carbaguanine + guanosine(34) in tRNA = 7-aminomethyl-7-carbaguanosine(34) in tRNA + guanine. It functions in the pathway tRNA modification; tRNA-queuosine biosynthesis. Catalyzes the base-exchange of a guanine (G) residue with the queuine precursor 7-aminomethyl-7-deazaguanine (PreQ1) at position 34 (anticodon wobble position) in tRNAs with GU(N) anticodons (tRNA-Asp, -Asn, -His and -Tyr). Catalysis occurs through a double-displacement mechanism. The nucleophile active site attacks the C1' of nucleotide 34 to detach the guanine base from the RNA, forming a covalent enzyme-RNA intermediate. The proton acceptor active site deprotonates the incoming PreQ1, allowing a nucleophilic attack on the C1' of the ribose to form the product. After dissociation, two additional enzymatic reactions on the tRNA convert PreQ1 to queuine (Q), resulting in the hypermodified nucleoside queuosine (7-(((4,5-cis-dihydroxy-2-cyclopenten-1-yl)amino)methyl)-7-deazaguanosine). The polypeptide is Queuine tRNA-ribosyltransferase (Synechococcus sp. (strain CC9311)).